The sequence spans 79 residues: Acyl carrier protein (79 aa).

The region spanning 2–77 (SEIGERVKKI…DATKFLEKNA (76 aa)) is the Carrier domain. Serine 37 is modified (O-(pantetheine 4'-phosphoryl)serine).

This sequence belongs to the acyl carrier protein (ACP) family. In terms of processing, 4'-phosphopantetheine is transferred from CoA to a specific serine of apo-ACP by AcpS. This modification is essential for activity because fatty acids are bound in thioester linkage to the sulfhydryl of the prosthetic group.

The protein localises to the cytoplasm. It participates in lipid metabolism; fatty acid biosynthesis. Carrier of the growing fatty acid chain in fatty acid biosynthesis. The sequence is that of Acyl carrier protein from Nitrobacter winogradskyi (strain ATCC 25391 / DSM 10237 / CIP 104748 / NCIMB 11846 / Nb-255).